A 131-amino-acid chain; its full sequence is Fumarate reductase subunit C (131 aa).

The next 3 membrane-spanning stretches (helical) occupy residues 30 to 50 (EGTA…LFAL), 57 to 77 (WMGF…LITL), and 109 to 129 (IIKG…YVAL).

Belongs to the FrdC family. Part of an enzyme complex containing four subunits: a flavoprotein (FrdA), an iron-sulfur protein (FrdB), and two hydrophobic anchor proteins (FrdC and FrdD).

It is found in the cell inner membrane. Two distinct, membrane-bound, FAD-containing enzymes are responsible for the catalysis of fumarate and succinate interconversion; fumarate reductase is used in anaerobic growth, and succinate dehydrogenase is used in aerobic growth. Anchors the catalytic components of the fumarate reductase complex to the cell inner membrane, binds quinones. This Salmonella dublin (strain CT_02021853) protein is Fumarate reductase subunit C.